Here is a 74-residue protein sequence, read N- to C-terminus: Brevinin-2Ef (74 aa).

The first 22 residues, 1–22 (MFTMKKSLLLIFFLGTISLSLC), serve as a signal peptide directing secretion. A propeptide spanning residues 23–41 (QEERNADDDDGEMTEEEKR) is cleaved from the precursor. Cysteines 68 and 74 form a disulfide.

This sequence belongs to the frog skin active peptide (FSAP) family. Brevinin subfamily. In terms of tissue distribution, expressed by the skin glands.

It is found in the secreted. In terms of biological role, shows antibacterial activity against representative Gram-negative and Gram-positive bacterial species, and hemolytic activity. The protein is Brevinin-2Ef of Pelophylax lessonae (Pool frog).